The primary structure comprises 557 residues: Potassium-transporting ATPase potassium-binding subunit (557 aa).

Helical transmembrane passes span 5-25 (GFLLIATFLLVLMVLARPLGS), 63-83 (LCAILGLNMLGLAVLFFMLLG), 132-152 (GLTVQNFLSAASGIAVIFALI), 170-190 (LLRITLWVLVPVALLIALFFI), 253-273 (FVQMLAIFLIPTALCFAFGEV), 283-303 (LLWAMSVIFVICVGVVMWAEV), 329-349 (VLVSSLFAVVTTAASCGAVIA), 356-376 (ALGGMVPMWLMQIGEVVFGGV), 379-399 (GLYGMMLFVLLAVFIAGLMIG), 416-436 (LTALAILVTPTLVLMGAALAM), 484-504 (LLAFCMFVGRFGVIIPVMAIA), and 526-546 (LFVGLLIGTVLLVGALTFIPA).

The protein belongs to the KdpA family. The system is composed of three essential subunits: KdpA, KdpB and KdpC.

It localises to the cell inner membrane. Its function is as follows. Part of the high-affinity ATP-driven potassium transport (or Kdp) system, which catalyzes the hydrolysis of ATP coupled with the electrogenic transport of potassium into the cytoplasm. This subunit binds the periplasmic potassium ions and delivers the ions to the membrane domain of KdpB through an intramembrane tunnel. In Escherichia coli O139:H28 (strain E24377A / ETEC), this protein is Potassium-transporting ATPase potassium-binding subunit.